The primary structure comprises 315 residues: 4-hydroxy-3-methylbut-2-enyl diphosphate reductase (315 aa).

Cys12 contributes to the [4Fe-4S] cluster binding site. (2E)-4-hydroxy-3-methylbut-2-enyl diphosphate contacts are provided by His43 and His81. Dimethylallyl diphosphate-binding residues include His43 and His81. The isopentenyl diphosphate site is built by His43 and His81. Residue Cys103 participates in [4Fe-4S] cluster binding. His131 provides a ligand contact to (2E)-4-hydroxy-3-methylbut-2-enyl diphosphate. His131 provides a ligand contact to dimethylallyl diphosphate. His131 lines the isopentenyl diphosphate pocket. Glu133 (proton donor) is an active-site residue. Thr170 is a binding site for (2E)-4-hydroxy-3-methylbut-2-enyl diphosphate. Residue Cys198 participates in [4Fe-4S] cluster binding. The (2E)-4-hydroxy-3-methylbut-2-enyl diphosphate site is built by Ser226, Asn228, and Ser271. The dimethylallyl diphosphate site is built by Ser226, Asn228, and Ser271. Residues Ser226, Asn228, and Ser271 each coordinate isopentenyl diphosphate.

Belongs to the IspH family. The cofactor is [4Fe-4S] cluster.

It carries out the reaction isopentenyl diphosphate + 2 oxidized [2Fe-2S]-[ferredoxin] + H2O = (2E)-4-hydroxy-3-methylbut-2-enyl diphosphate + 2 reduced [2Fe-2S]-[ferredoxin] + 2 H(+). The enzyme catalyses dimethylallyl diphosphate + 2 oxidized [2Fe-2S]-[ferredoxin] + H2O = (2E)-4-hydroxy-3-methylbut-2-enyl diphosphate + 2 reduced [2Fe-2S]-[ferredoxin] + 2 H(+). The protein operates within isoprenoid biosynthesis; dimethylallyl diphosphate biosynthesis; dimethylallyl diphosphate from (2E)-4-hydroxy-3-methylbutenyl diphosphate: step 1/1. It functions in the pathway isoprenoid biosynthesis; isopentenyl diphosphate biosynthesis via DXP pathway; isopentenyl diphosphate from 1-deoxy-D-xylulose 5-phosphate: step 6/6. Catalyzes the conversion of 1-hydroxy-2-methyl-2-(E)-butenyl 4-diphosphate (HMBPP) into a mixture of isopentenyl diphosphate (IPP) and dimethylallyl diphosphate (DMAPP). Acts in the terminal step of the DOXP/MEP pathway for isoprenoid precursor biosynthesis. In Geobacillus sp. (strain WCH70), this protein is 4-hydroxy-3-methylbut-2-enyl diphosphate reductase.